Consider the following 257-residue polypeptide: Ribosomal RNA small subunit methyltransferase A (257 aa).

S-adenosyl-L-methionine is bound by residues N12, L14, G39, E60, D85, and N105.

This sequence belongs to the class I-like SAM-binding methyltransferase superfamily. rRNA adenine N(6)-methyltransferase family. RsmA subfamily.

The protein resides in the cytoplasm. It catalyses the reaction adenosine(1518)/adenosine(1519) in 16S rRNA + 4 S-adenosyl-L-methionine = N(6)-dimethyladenosine(1518)/N(6)-dimethyladenosine(1519) in 16S rRNA + 4 S-adenosyl-L-homocysteine + 4 H(+). Its function is as follows. Specifically dimethylates two adjacent adenosines (A1518 and A1519) in the loop of a conserved hairpin near the 3'-end of 16S rRNA in the 30S particle. May play a critical role in biogenesis of 30S subunits. In Methylococcus capsulatus (strain ATCC 33009 / NCIMB 11132 / Bath), this protein is Ribosomal RNA small subunit methyltransferase A.